The chain runs to 223 residues: UPF0441 protein KPN78578_33850 (223 aa).

Residues 165–223 (SYGAAQPGRTMNVPKTAMAPKPATTTTVTRGGFGESVAKQSTMQRSAAGSTSSSRSMGG) are disordered. Low complexity-rich tracts occupy residues 177 to 193 (VPKT…TTVT) and 209 to 223 (RSAA…SMGG).

Belongs to the UPF0441 family.

In Klebsiella pneumoniae subsp. pneumoniae (strain ATCC 700721 / MGH 78578), this protein is UPF0441 protein KPN78578_33850.